The primary structure comprises 381 residues: MAASSSELEVITAKKPNVKGPRRVANQIPEEILKDSDLNEAIKALPANYNFEIHKTIWRVRQAKAKRVALQLPEGLQMFACVIADIIERFTEADTLVMGDVTYGACCVDDFTARALGADFMVHYGHSCLIPIDSTEGIKMLYVFVDIQIDTAHFLDTLRFNFPPGRSLALVSTIQFVAALQAASAALKPDYEVLVPQCRPLSPGEILGCTSPRLDKHVNAVIYLGDGRFHLESIMIANPDTPAYRYDPYSKVFSREYYDHDAMRATRLKAIESACSAQRWGLILGTLGRQGNPKILEHLESQLKSLGRSFTRVLLSEIFPRKLELLADVDAQQWRYSRLDGRMCIPWISIPIRVWGPGLLIIRITNLNGLHAKPHRRLVSR.

[4Fe-4S] cluster-binding residues include cysteine 106, cysteine 209, and cysteine 344.

The protein belongs to the DPH1/DPH2 family. DPH1 subfamily. Component of the 2-(3-amino-3-carboxypropyl)histidine synthase complex composed of dph1, dph2, dph3 and a NADH-dependent reductase. The cofactor is [4Fe-4S] cluster.

It is found in the nucleus. The protein resides in the cytoplasm. The catalysed reaction is L-histidyl-[translation elongation factor 2] + S-adenosyl-L-methionine = 2-[(3S)-amino-3-carboxypropyl]-L-histidyl-[translation elongation factor 2] + S-methyl-5'-thioadenosine + H(+). Its pathway is protein modification; peptidyl-diphthamide biosynthesis. In terms of biological role, catalyzes the first step of diphthamide biosynthesis, a post-translational modification of histidine which occurs in elongation factor 2. Dph1 and dph2 transfer a 3-amino-3-carboxypropyl (ACP) group from S-adenosyl-L-methionine (SAM) to a histidine residue, the reaction is assisted by a reduction system comprising dph3 and a NADH-dependent reductase. The sequence is that of 2-(3-amino-3-carboxypropyl)histidine synthase subunit 1 (dph1) from Danio rerio (Zebrafish).